The primary structure comprises 338 residues: tRNA N6-adenosine threonylcarbamoyltransferase (338 aa).

Positions 111 and 115 each coordinate Fe cation. Substrate-binding positions include 134 to 138 (LVSGG), Asp-167, Gly-180, and Asn-272. Position 300 (Asp-300) interacts with Fe cation.

Belongs to the KAE1 / TsaD family. Fe(2+) is required as a cofactor.

Its subcellular location is the cytoplasm. The enzyme catalyses L-threonylcarbamoyladenylate + adenosine(37) in tRNA = N(6)-L-threonylcarbamoyladenosine(37) in tRNA + AMP + H(+). In terms of biological role, required for the formation of a threonylcarbamoyl group on adenosine at position 37 (t(6)A37) in tRNAs that read codons beginning with adenine. Is involved in the transfer of the threonylcarbamoyl moiety of threonylcarbamoyl-AMP (TC-AMP) to the N6 group of A37, together with TsaE and TsaB. TsaD likely plays a direct catalytic role in this reaction. In Shewanella baltica (strain OS155 / ATCC BAA-1091), this protein is tRNA N6-adenosine threonylcarbamoyltransferase.